Here is a 313-residue protein sequence, read N- to C-terminus: Putative zinc finger protein 077L (313 aa).

A C3H1-type zinc finger spans residues 174-199; sequence CFSITKGIECPHYSCTYIHNYSQIEH. Positions 294–313 are disordered; it reads SDDSDSENNDEDDDWKIDLF. A compositionally biased stretch (acidic residues) spans 296–313; it reads DSDSENNDEDDDWKIDLF.

Belongs to the IIV-6 077L family.

This is Putative zinc finger protein 077L from Invertebrate iridescent virus 6 (IIV-6).